We begin with the raw amino-acid sequence, 206 residues long: Ribosomal RNA small subunit methyltransferase G (206 aa).

Residues Gly-74, Leu-79, 125–126 (VE), and Arg-140 each bind S-adenosyl-L-methionine.

Belongs to the methyltransferase superfamily. RNA methyltransferase RsmG family.

The protein localises to the cytoplasm. It carries out the reaction guanosine(527) in 16S rRNA + S-adenosyl-L-methionine = N(7)-methylguanosine(527) in 16S rRNA + S-adenosyl-L-homocysteine. Its function is as follows. Specifically methylates the N7 position of guanine in position 527 of 16S rRNA. The polypeptide is Ribosomal RNA small subunit methyltransferase G (Shewanella sp. (strain ANA-3)).